Reading from the N-terminus, the 548-residue chain is Chaperonin GroEL (548 aa).

ATP-binding positions include 30–33, Lys-51, 87–91, Gly-415, and Asp-495; these read TLGP and DGTTT.

The protein belongs to the chaperonin (HSP60) family. In terms of assembly, forms a cylinder of 14 subunits composed of two heptameric rings stacked back-to-back. Interacts with the co-chaperonin GroES.

The protein localises to the cytoplasm. The enzyme catalyses ATP + H2O + a folded polypeptide = ADP + phosphate + an unfolded polypeptide.. Functionally, together with its co-chaperonin GroES, plays an essential role in assisting protein folding. The GroEL-GroES system forms a nano-cage that allows encapsulation of the non-native substrate proteins and provides a physical environment optimized to promote and accelerate protein folding. The polypeptide is Chaperonin GroEL (Photorhabdus laumondii subsp. laumondii (strain DSM 15139 / CIP 105565 / TT01) (Photorhabdus luminescens subsp. laumondii)).